The primary structure comprises 656 residues: PAN2-PAN3 deadenylation complex subunit pan3 (656 aa).

Disordered regions lie at residues 1–24 (MAAT…KNRD) and 75–117 (SFTP…QQAN). The C3H1-type zinc finger occupies 24–53 (DTKETLCRNVVIYGHCRWEDSGCTFNHDQN). The PABPC-interacting motif-2 (PAM-2) signature appears at 63–83 (NSNRRVFNVESPSFTPANQQQ). 2 stretches are compositionally biased toward polar residues: residues 75 to 96 (SFTP…SQAA) and 107 to 117 (GTSTPTLQQAN). Residues 251-514 (QLLPNSGLPN…TVETLLGGIT (264 aa)) form a pseudokinase domain region. ATP-binding positions include 275–280 (TRNSTC), R302, 352–359 (DFHPLSET), and 412–413 (SK). Residues 515-553 (THLANFANFVMQESDEKEFHLMRELENGRIARLMFKLSV) are a coiled coil. The segment at 554–656 (VNERGDSCGV…SKPSATGATI (103 aa)) is knob domain.

This sequence belongs to the protein kinase superfamily. PAN3 family. As to quaternary structure, homodimer. Forms a heterotrimer with a catalytic subunit par-1/pan2 to form the poly(A)-nuclease (PAN) deadenylation complex. Interacts (via PAM-2 motif) with poly(A)-binding protein pabp-1 (via PABC domain), conferring substrate specificity of the enzyme complex.

It localises to the cytoplasm. Functionally, regulatory subunit of the poly(A)-nuclease (PAN) deadenylation complex, one of two cytoplasmic mRNA deadenylases involved in mRNA turnover. PAN specifically shortens poly(A) tails of RNA and the activity is stimulated by poly(A)-binding protein pabp-1. PAN deadenylation is followed by rapid degradation of the shortened mRNA tails by the CCR4-NOT complex. Deadenylated mRNAs are then degraded by two alternative mechanisms, namely exosome-mediated 3'-5' exonucleolytic degradation, or deadenylation-dependent mRNA decaping and subsequent 5'-3' exonucleolytic degradation by rgb-30/xrn1. May also be involved in post-transcriptional maturation of mRNA poly(A) tails. par-2/pan3 acts as a positive regulator for PAN activity, recruiting the catalytic subunit par-1/pan2 to mRNA via its interaction with RNA and with pabp-1. This Neurospora crassa (strain ATCC 24698 / 74-OR23-1A / CBS 708.71 / DSM 1257 / FGSC 987) protein is PAN2-PAN3 deadenylation complex subunit pan3 (par-2).